Here is a 515-residue protein sequence, read N- to C-terminus: Membrane-bound lytic murein transglycosylase F (515 aa).

The first 32 residues, 1-32 (MKKLKINYLFIGILTLLLAAALWPSIPWFGKA), serve as a signal peptide directing secretion. The segment at 33–269 (DNRIAAIQSR…RMEEKYLGHG (237 aa)) is non-LT domain. Positions 270 to 515 (DDFDYVDTRT…PFSLKKKDEN (246 aa)) are LT domain. Glu-314 is a catalytic residue. Residues 493 to 515 (QPSSNYLSHSPSLPFSLKKKDEN) are disordered.

This sequence in the N-terminal section; belongs to the bacterial solute-binding protein 3 family. It in the C-terminal section; belongs to the transglycosylase Slt family.

It localises to the cell outer membrane. It carries out the reaction Exolytic cleavage of the (1-&gt;4)-beta-glycosidic linkage between N-acetylmuramic acid (MurNAc) and N-acetylglucosamine (GlcNAc) residues in peptidoglycan, from either the reducing or the non-reducing ends of the peptidoglycan chains, with concomitant formation of a 1,6-anhydrobond in the MurNAc residue.. Murein-degrading enzyme that degrades murein glycan strands and insoluble, high-molecular weight murein sacculi, with the concomitant formation of a 1,6-anhydromuramoyl product. Lytic transglycosylases (LTs) play an integral role in the metabolism of the peptidoglycan (PG) sacculus. Their lytic action creates space within the PG sacculus to allow for its expansion as well as for the insertion of various structures such as secretion systems and flagella. The protein is Membrane-bound lytic murein transglycosylase F of Citrobacter koseri (strain ATCC BAA-895 / CDC 4225-83 / SGSC4696).